The primary structure comprises 41 residues: Disintegrin obtustatin (41 aa).

Disulfide bonds link Cys-1/Cys-10, Cys-6/Cys-29, Cys-7/Cys-34, and Cys-19/Cys-36. In terms of domain architecture, Disintegrin spans 1 to 41; sequence CTTGPCCRQCKLKPAGTTCWKTSLTSHYCTGKSCDCPLYPG. The short motif at 21–23 is the Cell attachment site; atypical (KTS) element; that stretch reads KTS.

This sequence belongs to the disintegrin family. Short disintegrin subfamily. Monomer. In terms of tissue distribution, expressed by the venom gland.

It is found in the secreted. Is a potent and selective inhibitor of alpha-1/beta-1 (ITGA1/ITGB1) integrin. It blocks the adhesion of alpha-1/beta-1-expressing K562 cells to immobilized collagens IV and I with IC(50) of 2 and 0.5 nM, respectively. Potently inhibits angiogenesis in chicken and in mouse model and reduces tumor development by half. Is 25-fold less potent than viperistatin. This chain is Disintegrin obtustatin, found in Macrovipera lebetina obtusa (Levant blunt-nosed viper).